The sequence spans 783 residues: Aconitate hydratase, mitochondrial (783 aa).

Residues 1–25 constitute a mitochondrion transit peptide; it reads MITTRLARMGALAPKSRLLFGTRGM. Substrate is bound by residues glutamine 102 and 195 to 197; that span reads DSH. Residues cysteine 388, cysteine 451, and cysteine 454 each coordinate [4Fe-4S] cluster. 2 residues coordinate substrate: arginine 477 and arginine 482. Residues 524–555 are disordered; that stretch reads EFKLKAPTGDGLPSRGYDPGRDTYQAPPTDRS. Residues arginine 610 and 673 to 674 each bind substrate; that span reads SR.

It belongs to the aconitase/IPM isomerase family. It depends on [4Fe-4S] cluster as a cofactor.

The protein resides in the mitochondrion. The catalysed reaction is citrate = D-threo-isocitrate. The enzyme catalyses (2R)-homocitrate = cis-homoaconitate + H2O. It participates in carbohydrate metabolism; tricarboxylic acid cycle; isocitrate from oxaloacetate: step 2/2. The protein operates within amino-acid biosynthesis; L-lysine biosynthesis via AAA pathway; L-alpha-aminoadipate from 2-oxoglutarate: step 2/5. In terms of biological role, catalyzes the isomerization of citrate to isocitrate via cis-aconitate, a step in the citric acid cycle. Also catalyzes the reversible dehydration of (R)-homocitrate to cis-homoaconitate, a step in the alpha-aminoadipate pathway for lysine biosynthesis. The sequence is that of Aconitate hydratase, mitochondrial (acoA) from Emericella nidulans (strain FGSC A4 / ATCC 38163 / CBS 112.46 / NRRL 194 / M139) (Aspergillus nidulans).